Consider the following 401-residue polypeptide: Dual-specificity RNA methyltransferase RlmN (401 aa).

Residue Glu-114 is the Proton acceptor of the active site. The region spanning 120 to 365 (DKGRGTLCVS…TMVRRTRGDD (246 aa)) is the Radical SAM core domain. Cys-127 and Cys-370 are disulfide-bonded. [4Fe-4S] cluster contacts are provided by Cys-134, Cys-138, and Cys-141. S-adenosyl-L-methionine-binding positions include 187 to 188 (GE), Ser-219, 241 to 243 (SLH), and Asn-327. The active-site S-methylcysteine intermediate is the Cys-370.

It belongs to the radical SAM superfamily. RlmN family. [4Fe-4S] cluster is required as a cofactor.

The protein localises to the cytoplasm. It catalyses the reaction adenosine(2503) in 23S rRNA + 2 reduced [2Fe-2S]-[ferredoxin] + 2 S-adenosyl-L-methionine = 2-methyladenosine(2503) in 23S rRNA + 5'-deoxyadenosine + L-methionine + 2 oxidized [2Fe-2S]-[ferredoxin] + S-adenosyl-L-homocysteine. The catalysed reaction is adenosine(37) in tRNA + 2 reduced [2Fe-2S]-[ferredoxin] + 2 S-adenosyl-L-methionine = 2-methyladenosine(37) in tRNA + 5'-deoxyadenosine + L-methionine + 2 oxidized [2Fe-2S]-[ferredoxin] + S-adenosyl-L-homocysteine. Its function is as follows. Specifically methylates position 2 of adenine 2503 in 23S rRNA and position 2 of adenine 37 in tRNAs. m2A2503 modification seems to play a crucial role in the proofreading step occurring at the peptidyl transferase center and thus would serve to optimize ribosomal fidelity. The polypeptide is Dual-specificity RNA methyltransferase RlmN (Xanthomonas campestris pv. campestris (strain B100)).